Here is a 425-residue protein sequence, read N- to C-terminus: MVNEYKRIVLLRGLECINKHYFSLFKSLLARDLNLERDNQEQYTTIQIANMMEEKFPADSGLGKLIEFCEEVPALRKRAEILKKERSEVTGETSLEKNGQEAGPATPTSTTSHMLASERGETSATQEETSTAQAGTSTAQAGTSTAQAGTSTAQKRKSMREEETGVKKSKAAKEPDQPPCCEEPTAMCQSPILHSSSSASSNILSAKNQKSQPQNQNIPRGAVLHSEPLTVMVLTATDPFEYESPEHEVKNMFHATVATVSQYFHVKVFNIDLKEKFTKNNFITISNYFESKGILEINETSSVLEAAPKQMIEVPNCITRNANASPKICDIQKGTSGTVFYGVFTLHKKKVKTQNTSYEIKDGSGSIEVVGSGQWHNINCKEGDKLHLFCFHLKRERGQPKLVCGDHSFVKVTKAGKKKEASTVQ.

Residues 1–88 (MVNEYKRIVL…AEILKKERSE (88 aa)) enclose the Pyrin domain. The span at 86–99 (RSEVTGETSLEKNG) shows a compositional bias: basic and acidic residues. Residues 86–223 (RSEVTGETSL…QNQNIPRGAV (138 aa)) are disordered. The span at 122–153 (TSATQEETSTAQAGTSTAQAGTSTAQAGTSTA) shows a compositional bias: low complexity. A run of 4 repeats spans residues 129-135 (TSTAQAG), 136-142 (TSTAQAG), 143-149 (TSTAQAG), and 150-156 (TSTAQKR). The interval 129 to 177 (TSTAQAGTSTAQAGTSTAQAGTSTAQKRKSMREEETGVKKSKAAKEPDQ) is 4 X 7 AA tandem repeats of T-S-T-A-Q-A-[GR]. Over residues 159-176 (MREEETGVKKSKAAKEPD) the composition is skewed to basic and acidic residues. The segment covering 190 to 206 (SPILHSSSSASSNILSA) has biased composition (low complexity). The segment covering 207-218 (KNQKSQPQNQNI) has biased composition (polar residues). The HIN-200 domain maps to 213 to 413 (PQNQNIPRGA…CGDHSFVKVT (201 aa)).

Belongs to the HIN-200 family. Interacts with HOXB2. Mononuclear phagocytes.

The protein resides in the nucleus. In terms of biological role, inhibits cell growth via p53/TP53 and RB1-dependent and independent pathways. May work in synergy with TP53 to promote the transcription of CDKN1A/P21. In Mus musculus (Mouse), this protein is Interferon-activable protein 211.